A 76-amino-acid chain; its full sequence is KANTR integral membrane protein (76 aa).

The signal sequence occupies residues 1 to 25 (MSPFSLLILVICAFSLFFLINLTRG). The Extracellular segment spans residues 26–34 (LSILLVFSK). Residues 35 to 55 (NQLLALLLLSIVSLFSISLIS) form a helical membrane-spanning segment. Topologically, residues 56–76 (ALIFFDLLPSTFFGFILLFFF) are cytoplasmic.

Its subcellular location is the membrane. This chain is KANTR integral membrane protein, found in Homo sapiens (Human).